Reading from the N-terminus, the 716-residue chain is UvrABC system protein C (716 aa).

The region spanning 14 to 94 (AEPGCYLMKD…IKRHRPRFNI (81 aa)) is the GIY-YIG domain. A UVR domain is found at 206–241 (TELVERLHGRMDEAADALRFEDAARLRDQLQAVERS).

Belongs to the UvrC family. Interacts with UvrB in an incision complex.

It is found in the cytoplasm. Its function is as follows. The UvrABC repair system catalyzes the recognition and processing of DNA lesions. UvrC both incises the 5' and 3' sides of the lesion. The N-terminal half is responsible for the 3' incision and the C-terminal half is responsible for the 5' incision. The polypeptide is UvrABC system protein C (Anaeromyxobacter sp. (strain Fw109-5)).